We begin with the raw amino-acid sequence, 312 residues long: Malate dehydrogenase (312 aa).

Residues Gly12–Gly17 and Asp36 each bind NAD(+). Substrate-binding residues include Arg87 and Arg93. Residues Asn100 and Leu123 to Asn125 contribute to the NAD(+) site. Asn125 provides a ligand contact to substrate. Ser149 is subject to Phosphoserine. Arg156 is a substrate binding site. The active-site Proton acceptor is His180.

Belongs to the LDH/MDH superfamily. MDH type 3 family.

It catalyses the reaction (S)-malate + NAD(+) = oxaloacetate + NADH + H(+). Catalyzes the reversible oxidation of malate to oxaloacetate. The sequence is that of Malate dehydrogenase from Bacillus pumilus (strain SAFR-032).